The following is a 145-amino-acid chain: Large ribosomal subunit protein uL15 (145 aa).

Residues 1-52 (MFNLLKPKGASKRRKIVGRGPGSGLGKTSGRGQKGQKARNTSPRLGFEGGQT) form a disordered region. The segment covering 19–33 (RGPGSGLGKTSGRGQ) has biased composition (gly residues).

This sequence belongs to the universal ribosomal protein uL15 family. In terms of assembly, part of the 50S ribosomal subunit.

In terms of biological role, binds to the 23S rRNA. The chain is Large ribosomal subunit protein uL15 from Borreliella burgdorferi (strain ATCC 35210 / DSM 4680 / CIP 102532 / B31) (Borrelia burgdorferi).